A 161-amino-acid chain; its full sequence is DNA-directed RNA polymerase 18 kDa subunit (161 aa).

It belongs to the poxviridae DNA-directed RNA polymerase 18 kDa subunit family. In terms of assembly, the DNA-dependent RNA polymerase used for intermediate and late genes expression consists of eight subunits Rpo30/OPG66, Rpo7/OPG90, Rpo22/OPG103, Rpo147/OPG105, Rpo18/OPG119, Rpo19/OPG131, Rpo132/OPG151 and Rpo35/OPG156. The same holoenzyme, with the addition of the transcription-specificity factor OPG109, is used for early gene expression.

It localises to the virion. The catalysed reaction is RNA(n) + a ribonucleoside 5'-triphosphate = RNA(n+1) + diphosphate. Part of the DNA-dependent RNA polymerase which catalyzes the transcription of viral DNA into RNA using the four ribonucleoside triphosphates as substrates. Responsible for the transcription of early, intermediate and late genes. DNA-dependent RNA polymerase associates with the early transcription factor (ETF), itself composed of OPG118 and OPG133, thereby allowing the early genes transcription. Late transcription, and probably also intermediate transcription, require newly synthesized RNA polymerase. The chain is DNA-directed RNA polymerase 18 kDa subunit (OPG119) from Vaccinia virus (strain Copenhagen) (VACV).